The following is a 778-amino-acid chain: Protein PHOTOPERIODIC CONTROL OF HYPOCOTYL 1 (778 aa).

Disordered stretches follow at residues 74–95 (QKRE…VGSS), 186–283 (HNRG…NSAT), and 316–335 (KTSP…KEAS). Basic and acidic residues predominate over residues 198-212 (SSKDTQEDGPRKNES). Positions 230-247 (SGSISSSSTKGKGIKGYS) are enriched in low complexity. Residues 265-275 (PDRENSVDGHQ) show a composition bias toward basic and acidic residues. Residues 317-326 (TSPSDSSETK) are compositionally biased toward polar residues. In terms of domain architecture, F-box spans 470–505 (WPLLPNDLLELIMGHLETSFEIFLFRSVCSSWRSVV).

As to quaternary structure, interacts with light-activated phyB. Binds directly to PIF1 and COP1. Post-translationally, ubiquitinated by COP1 in darkness; this leads to proteasomal degradation. Mainly expressed in cotyledons, hypocotyls, leaves and roots.

It is found in the nucleus. Functionally, together with PCHL, regulates growth and development adaptation to the ambient environment by controlling negatively phytochrome B (phyB) dark reversion, a temperature-dependent thermal relaxation process during which phyB reverts from the active to the inactive state. Contributes to red (R) light-triggered photomorphogenesis. Promotes various light responses such as seed germination, hypocotyl gravitropism and chlorophyll biosynthesis, via direct interaction with PIF1 and COP1. Prevents DNA-binding ability of PIF1 to negatively regulate the expressions of its target genes. Facilitates the physical interaction between phyB and PIF1 and the subsequent light-induced degradation of PIF1. The chain is Protein PHOTOPERIODIC CONTROL OF HYPOCOTYL 1 from Arabidopsis thaliana (Mouse-ear cress).